Here is a 303-residue protein sequence, read N- to C-terminus: Large ribosomal subunit protein uL1m (303 aa).

Belongs to the universal ribosomal protein uL1 family. Component of the mitochondrial large ribosomal subunit (mt-LSU). Mature N.crassa 74S mitochondrial ribosomes consist of a small (37S) and a large (54S) subunit. The 37S small subunit contains a 16S ribosomal RNA (16S mt-rRNA) and 32 different proteins. The 54S large subunit contains a 23S rRNA (23S mt-rRNA) and 42 different proteins.

Its subcellular location is the mitochondrion. Functionally, component of the mitochondrial ribosome (mitoribosome), a dedicated translation machinery responsible for the synthesis of mitochondrial genome-encoded proteins, including at least some of the essential transmembrane subunits of the mitochondrial respiratory chain. The mitoribosomes are attached to the mitochondrial inner membrane and translation products are cotranslationally integrated into the membrane. The protein is Large ribosomal subunit protein uL1m (mrpl1) of Neurospora crassa (strain ATCC 24698 / 74-OR23-1A / CBS 708.71 / DSM 1257 / FGSC 987).